Reading from the N-terminus, the 352-residue chain is NAD(P)H pyrophosphatase NUDT13, mitochondrial (352 aa).

Residues 1–20 constitute a mitochondrion transit peptide; the sequence is MSLYCGIACRRKFFWCYRLL. One can recognise a Nudix hydrolase domain in the interval 196–323; it reads PQMAPVAITL…PYTQQQNGTF (128 aa). The short motif at 216–240 is the Nudix box element; sequence RQSSFPKGMYSALAGFCDIGESVEE.

The protein belongs to the Nudix hydrolase family. Requires Mg(2+) as cofactor. The cofactor is Mn(2+). Highly expressed in metastasis-suppressed chromosome 6 melanoma hybrids.

It localises to the mitochondrion. It carries out the reaction NADH + H2O = reduced beta-nicotinamide D-ribonucleotide + AMP + 2 H(+). It catalyses the reaction NAD(+) + H2O = beta-nicotinamide D-ribonucleotide + AMP + 2 H(+). The catalysed reaction is NADPH + H2O = reduced beta-nicotinamide D-ribonucleotide + adenosine 2',5'-bisphosphate + 2 H(+). Its function is as follows. NAD(P)H pyrophosphatase that hydrolyzes NADH into NMNH and AMP, and NADPH into NMNH and 2',5'-ADP. Has a marked preference for the reduced pyridine nucleotides. Does not show activity toward NAD-capped RNAs; the NAD-cap is an atypical cap present at the 5'-end of some RNAs. The chain is NAD(P)H pyrophosphatase NUDT13, mitochondrial from Homo sapiens (Human).